We begin with the raw amino-acid sequence, 270 residues long: 2-aminoethanethiol dioxygenase (270 aa).

The segment at Phe-21–Pro-48 is disordered. The Fe cation site is built by His-112 and His-114. The segment at Gly-140 to Ala-164 is disordered. His-193 is a Fe cation binding site. The 3'-(S-cysteinyl)-tyrosine (Cys-Tyr) cross-link spans Cys-220–Tyr-223.

In terms of assembly, monomer. The cofactor is Fe cation.

It catalyses the reaction cysteamine + O2 = hypotaurine + H(+). The enzyme catalyses N-terminal L-cysteinyl-[protein] + O2 = N-terminal S-hydroxy-S-oxy-L-cysteinyl-[protein] + H(+). Functionally, plays a vital role in regulating thiol metabolism and preserving oxygen homeostasis by oxidizing the sulfur of cysteamine and N-terminal cysteine-containing proteins to their corresponding sulfinic acids using O2 as a cosubstrate. Catalyzes the oxidation of cysteamine (2-aminoethanethiol) to hypotaurine. Catalyzes the oxidation of regulators of G-protein signaling 4 (RGS4) and 5 (RGS5) and interleukin-32 (IL32). The polypeptide is 2-aminoethanethiol dioxygenase (ADO) (Homo sapiens (Human)).